The following is a 100-amino-acid chain: Large ribosomal subunit protein uL23 (100 aa).

This sequence belongs to the universal ribosomal protein uL23 family. In terms of assembly, part of the 50S ribosomal subunit. Contacts protein L29, and trigger factor when it is bound to the ribosome.

Its function is as follows. One of the early assembly proteins it binds 23S rRNA. One of the proteins that surrounds the polypeptide exit tunnel on the outside of the ribosome. Forms the main docking site for trigger factor binding to the ribosome. This chain is Large ribosomal subunit protein uL23, found in Buchnera aphidicola subsp. Schizaphis graminum (strain Sg).